Reading from the N-terminus, the 260-residue chain is Cytochrome c oxidase subunit 2 (260 aa).

Over 1–43 (MILRSLSCRFLTIALCDAAEPWQLGFQDAATPMMQGIIDLHHD) the chain is Mitochondrial intermembrane. A helical membrane pass occupies residues 44–64 (IFFFLILILVFVLWMLVRALW). The Mitochondrial matrix segment spans residues 65-84 (HFNEQTNPIPQRIVHGTTIE). A helical transmembrane segment spans residues 85–105 (IIWTIFPSVILLFIAIPSFAL). At 106 to 260 (LYSMDGVLVD…VSNQLILQTN (155 aa)) the chain is on the mitochondrial intermembrane side. Positions 189, 224, 226, 228, 232, and 235 each coordinate Cu cation. Glutamate 226 contributes to the Mg(2+) binding site.

This sequence belongs to the cytochrome c oxidase subunit 2 family. Component of the cytochrome c oxidase (complex IV, CIV), a multisubunit enzyme composed of a catalytic core of 3 subunits and several supernumerary subunits. The complex exists as a monomer or a dimer and forms supercomplexes (SCs) in the inner mitochondrial membrane with ubiquinol-cytochrome c oxidoreductase (cytochrome b-c1 complex, complex III, CIII). The cofactor is Cu cation.

It is found in the mitochondrion inner membrane. The enzyme catalyses 4 Fe(II)-[cytochrome c] + O2 + 8 H(+)(in) = 4 Fe(III)-[cytochrome c] + 2 H2O + 4 H(+)(out). Functionally, component of the cytochrome c oxidase, the last enzyme in the mitochondrial electron transport chain which drives oxidative phosphorylation. The respiratory chain contains 3 multisubunit complexes succinate dehydrogenase (complex II, CII), ubiquinol-cytochrome c oxidoreductase (cytochrome b-c1 complex, complex III, CIII) and cytochrome c oxidase (complex IV, CIV), that cooperate to transfer electrons derived from NADH and succinate to molecular oxygen, creating an electrochemical gradient over the inner membrane that drives transmembrane transport and the ATP synthase. Cytochrome c oxidase is the component of the respiratory chain that catalyzes the reduction of oxygen to water. Electrons originating from reduced cytochrome c in the intermembrane space (IMS) are transferred via the dinuclear copper A center (CU(A)) of subunit 2 and heme A of subunit 1 to the active site in subunit 1, a binuclear center (BNC) formed by heme A3 and copper B (CU(B)). The BNC reduces molecular oxygen to 2 water molecules using 4 electrons from cytochrome c in the IMS and 4 protons from the mitochondrial matrix. This chain is Cytochrome c oxidase subunit 2 (COX2), found in Triticum aestivum (Wheat).